Here is a 337-residue protein sequence, read N- to C-terminus: Mitochondrial amidoxime-reducing component 1 (337 aa).

Residue Gly2 is the site of N-myristoyl glycine attachment. Residues Gly2–Pro20 are Mitochondrial matrix-facing. A helical; Signal-anchor for type II membrane protein transmembrane segment spans residues Gly21–Trp40. Over Arg41–Gln337 the chain is Cytoplasmic. Positions 67, 68, and 92 each coordinate Mo-molybdopterin. The interval Phe93 to Phe183 is MOSC N-terminal region. Positions Met187–Leu335 constitute an MOSC domain. Residues Thr210, Ser211, Arg238, Asn240, Ser271, Arg272, Cys273, and Tyr317 each coordinate Mo-molybdopterin.

Component of a complex composed of cytochrome b5, NADH-cytochrome b5 reductase and MTARC1. Mo-molybdopterin is required as a cofactor.

The protein localises to the mitochondrion outer membrane. It localises to the membrane. The catalysed reaction is N(omega)-hydroxy-L-arginine + 2 Fe(II)-[cytochrome b5] + 2 H(+) = L-arginine + 2 Fe(III)-[cytochrome b5] + H2O. Catalyzes the reduction of N-oxygenated molecules, acting as a counterpart of cytochrome P450 and flavin-containing monooxygenases in metabolic cycles. As a component of prodrug-converting system, reduces a multitude of N-hydroxylated prodrugs particularly amidoximes, leading to increased drug bioavailability. May be involved in mitochondrial N(omega)-hydroxy-L-arginine (NOHA) reduction, regulating endogenous nitric oxide levels and biosynthesis. Postulated to cleave the N-OH bond of N-hydroxylated substrates in concert with electron transfer from NADH to cytochrome b5 reductase then to cytochrome b5, the ultimate electron donor that primes the active site for substrate reduction. In Homo sapiens (Human), this protein is Mitochondrial amidoxime-reducing component 1.